Reading from the N-terminus, the 494-residue chain is Protein nucleotidyltransferase YdiU (494 aa).

ATP contacts are provided by G101, G103, R104, K123, D135, G136, R186, and R193. Catalysis depends on D262, which acts as the Proton acceptor. Mg(2+) contacts are provided by N263 and D272. D272 lines the ATP pocket.

It belongs to the SELO family. It depends on Mg(2+) as a cofactor. Requires Mn(2+) as cofactor.

It catalyses the reaction L-seryl-[protein] + ATP = 3-O-(5'-adenylyl)-L-seryl-[protein] + diphosphate. It carries out the reaction L-threonyl-[protein] + ATP = 3-O-(5'-adenylyl)-L-threonyl-[protein] + diphosphate. The enzyme catalyses L-tyrosyl-[protein] + ATP = O-(5'-adenylyl)-L-tyrosyl-[protein] + diphosphate. The catalysed reaction is L-histidyl-[protein] + UTP = N(tele)-(5'-uridylyl)-L-histidyl-[protein] + diphosphate. It catalyses the reaction L-seryl-[protein] + UTP = O-(5'-uridylyl)-L-seryl-[protein] + diphosphate. It carries out the reaction L-tyrosyl-[protein] + UTP = O-(5'-uridylyl)-L-tyrosyl-[protein] + diphosphate. Its function is as follows. Nucleotidyltransferase involved in the post-translational modification of proteins. It can catalyze the addition of adenosine monophosphate (AMP) or uridine monophosphate (UMP) to a protein, resulting in modifications known as AMPylation and UMPylation. In Chromohalobacter salexigens (strain ATCC BAA-138 / DSM 3043 / CIP 106854 / NCIMB 13768 / 1H11), this protein is Protein nucleotidyltransferase YdiU.